The chain runs to 75 residues: Tautomerase PptA (75 aa).

The Proton acceptor; via imino nitrogen role is filled by Pro2.

This sequence belongs to the 4-oxalocrotonate tautomerase family. PptA subfamily. In terms of assembly, homodimer.

Its subcellular location is the cytoplasm. This chain is Tautomerase PptA, found in Escherichia coli O127:H6 (strain E2348/69 / EPEC).